A 305-amino-acid chain; its full sequence is tRNA pseudouridine synthase B (305 aa).

Catalysis depends on aspartate 39, which acts as the Nucleophile.

The protein belongs to the pseudouridine synthase TruB family. Type 1 subfamily.

It carries out the reaction uridine(55) in tRNA = pseudouridine(55) in tRNA. In terms of biological role, responsible for synthesis of pseudouridine from uracil-55 in the psi GC loop of transfer RNAs. The sequence is that of tRNA pseudouridine synthase B from Staphylococcus aureus (strain bovine RF122 / ET3-1).